We begin with the raw amino-acid sequence, 245 residues long: tRNA (cytidine/uridine-2'-O-)-methyltransferase TrmJ (245 aa).

S-adenosyl-L-methionine is bound by residues 79–81 (TSA), glycine 114, isoleucine 134, and 141–143 (SSL).

The protein belongs to the class IV-like SAM-binding methyltransferase superfamily. RNA methyltransferase TrmH family. Homodimer.

It is found in the cytoplasm. It carries out the reaction cytidine(32) in tRNA + S-adenosyl-L-methionine = 2'-O-methylcytidine(32) in tRNA + S-adenosyl-L-homocysteine + H(+). The enzyme catalyses uridine(32) in tRNA + S-adenosyl-L-methionine = 2'-O-methyluridine(32) in tRNA + S-adenosyl-L-homocysteine + H(+). Its function is as follows. Catalyzes the formation of 2'O-methylated cytidine (Cm32) or 2'O-methylated uridine (Um32) at position 32 in tRNA. This is tRNA (cytidine/uridine-2'-O-)-methyltransferase TrmJ (trmJ) from Cronobacter sakazakii (strain ATCC BAA-894) (Enterobacter sakazakii).